The following is a 377-amino-acid chain: Succinyl-diaminopimelate desuccinylase (377 aa).

A Zn(2+)-binding site is contributed by His75. Residue Asp77 is part of the active site. Asp106 provides a ligand contact to Zn(2+). Glu136 serves as the catalytic Proton acceptor. The Zn(2+) site is built by Glu137, Glu165, and His350.

Belongs to the peptidase M20A family. DapE subfamily. As to quaternary structure, homodimer. Zn(2+) is required as a cofactor. Requires Co(2+) as cofactor.

It carries out the reaction N-succinyl-(2S,6S)-2,6-diaminopimelate + H2O = (2S,6S)-2,6-diaminopimelate + succinate. It functions in the pathway amino-acid biosynthesis; L-lysine biosynthesis via DAP pathway; LL-2,6-diaminopimelate from (S)-tetrahydrodipicolinate (succinylase route): step 3/3. Its function is as follows. Catalyzes the hydrolysis of N-succinyl-L,L-diaminopimelic acid (SDAP), forming succinate and LL-2,6-diaminopimelate (DAP), an intermediate involved in the bacterial biosynthesis of lysine and meso-diaminopimelic acid, an essential component of bacterial cell walls. This chain is Succinyl-diaminopimelate desuccinylase, found in Sphingopyxis alaskensis (strain DSM 13593 / LMG 18877 / RB2256) (Sphingomonas alaskensis).